The following is a 293-amino-acid chain: Group 3 late-embryogenesis abundant protein, mitochondrial (293 aa).

The N-terminal 31 residues, 1-31 (MFLARNAGRAGYRGVVAYQQAASFSVSSAKA), are a transit peptide targeting the mitochondrion. Positions 27–43 (SSAKAAGSRSSGGSDAG) are enriched in low complexity. Positions 27–52 (SSAKAAGSRSSGGSDAGDYAREAAEH) are disordered. LEA 11-mer repeat repeat units lie at residues 58 to 68 (KDLKNEASWKA), 83 to 93 (KDTVKEGVHDM), 123 to 133 (KNAAQDTAATL), 134 to 144 (KDKAGSAWNQA), 145 to 155 (KHVVEDKGEDV), 160 to 170 (KDTASKVWGKA), 171 to 181 (KHVAEDVKENA), 199 to 209 (KDKAADVLSGA), and 210 to 220 (KHTAENLAHKA). The tract at residues 217 to 293 (AHKAQAAIHD…KGPGQAGGRR (77 aa)) is disordered. Low complexity predominate over residues 230 to 265 (SSGSQSQSQSQSQYRQGQQQGRQDQQQSKSQWGQTS). Over residues 279–293 (GPQGGKGPGQAGGRR) the composition is skewed to gly residues.

This sequence belongs to the LEA type 4 family.

It is found in the mitochondrion. Mitochondrial heat soluble protein acting as a molecular shield in water-deficient condition. In Ramazzottius varieornatus (Water bear), this protein is Group 3 late-embryogenesis abundant protein, mitochondrial.